The primary structure comprises 205 residues: Superoxide dismutase [Mn] (205 aa).

H30, H78, D166, and H170 together coordinate Mn(2+).

The protein belongs to the iron/manganese superoxide dismutase family. Homodimer. Mn(2+) is required as a cofactor.

The enzyme catalyses 2 superoxide + 2 H(+) = H2O2 + O2. Destroys superoxide anion radicals which are normally produced within the cells and which are toxic to biological systems. In Chlamydia muridarum (strain MoPn / Nigg), this protein is Superoxide dismutase [Mn] (sodA).